The chain runs to 396 residues: Bifunctional enzyme Fae/Hps (396 aa).

The formaldehyde-activating enzyme stretch occupies residues 1-161 (MYQIGEALIG…YEKDRGVHAI (161 aa)). The active-site Proton donor is the His17. 5 residues coordinate substrate: Asp19, Leu48, Lys66, Thr68, and Gln83. The 3-hexulose-6-phosphate synthase stretch occupies residues 162-396 (MGYKITRLWD…IDQYRIMTDF (235 aa)).

The protein in the N-terminal section; belongs to the formaldehyde-activating enzyme family. This sequence in the C-terminal section; belongs to the HPS/KGPDC family. HPS subfamily.

It carries out the reaction 5,6,7,8-tetrahydromethanopterin + formaldehyde = 5,10-methylenetetrahydromethanopterin + H2O. The enzyme catalyses D-ribulose 5-phosphate + formaldehyde = D-arabino-hex-3-ulose 6-phosphate. It participates in carbohydrate biosynthesis; D-ribose 5-phosphate biosynthesis. Functionally, catalyzes the condensation of formaldehyde with tetrahydromethanopterin (H(4)MPT) to 5,10-methylenetetrahydromethanopterin. Catalyzes the reversible formation of ribulose-5-phosphate and formaldehyde from 3-hexulose-6-phosphate. This chain is Bifunctional enzyme Fae/Hps, found in Methanocella arvoryzae (strain DSM 22066 / NBRC 105507 / MRE50).